Consider the following 364-residue polypeptide: Probable dual-specificity RNA methyltransferase RlmN (364 aa).

The active-site Proton acceptor is E107. The Radical SAM core domain maps to 113–346 (HDYGNSVCVT…ATIRREQGSD (234 aa)). An intrachain disulfide couples C120 to C351. [4Fe-4S] cluster-binding residues include C127, C131, and C134. S-adenosyl-L-methionine is bound by residues 177 to 178 (GE), S209, 232 to 234 (SLH), and N308. C351 serves as the catalytic S-methylcysteine intermediate.

It belongs to the radical SAM superfamily. RlmN family. The cofactor is [4Fe-4S] cluster.

The protein localises to the cytoplasm. The catalysed reaction is adenosine(2503) in 23S rRNA + 2 reduced [2Fe-2S]-[ferredoxin] + 2 S-adenosyl-L-methionine = 2-methyladenosine(2503) in 23S rRNA + 5'-deoxyadenosine + L-methionine + 2 oxidized [2Fe-2S]-[ferredoxin] + S-adenosyl-L-homocysteine. It catalyses the reaction adenosine(37) in tRNA + 2 reduced [2Fe-2S]-[ferredoxin] + 2 S-adenosyl-L-methionine = 2-methyladenosine(37) in tRNA + 5'-deoxyadenosine + L-methionine + 2 oxidized [2Fe-2S]-[ferredoxin] + S-adenosyl-L-homocysteine. In terms of biological role, specifically methylates position 2 of adenine 2503 in 23S rRNA and position 2 of adenine 37 in tRNAs. Confers resistance to some classes of antibiotics. The protein is Probable dual-specificity RNA methyltransferase RlmN of Staphylococcus aureus (strain Mu3 / ATCC 700698).